A 144-amino-acid polypeptide reads, in one-letter code: MAKKIVGFVKLQVPAGKANPSPPIGPALGQRGLNIMEFCKAFNAQTQGVEPGLPLPVVITAYADKSFTFIIKTPPAVTLIKKAIKLDKGSATPHTAKVGKITRAQLEEIAKTKMKDMTAADLDAAVRTIAGSARSMGVTVEGVV.

This sequence belongs to the universal ribosomal protein uL11 family. Part of the ribosomal stalk of the 50S ribosomal subunit. Interacts with L10 and the large rRNA to form the base of the stalk. L10 forms an elongated spine to which L12 dimers bind in a sequential fashion forming a multimeric L10(L12)X complex. One or more lysine residues are methylated.

In terms of biological role, forms part of the ribosomal stalk which helps the ribosome interact with GTP-bound translation factors. In Polaromonas sp. (strain JS666 / ATCC BAA-500), this protein is Large ribosomal subunit protein uL11.